The chain runs to 71 residues: Sec-independent protein translocase protein TatA (71 aa).

The chain crosses the membrane as a helical span at residues 1-21 (MGSFSIWHWLIVLVVVLLLFG). Positions 47 to 71 (AEEAKTVEHRTDEPVGEVKQKASKS) are disordered. The segment covering 49–71 (EAKTVEHRTDEPVGEVKQKASKS) has biased composition (basic and acidic residues).

The protein belongs to the TatA/E family. In terms of assembly, the Tat system comprises two distinct complexes: a TatABC complex, containing multiple copies of TatA, TatB and TatC subunits, and a separate TatA complex, containing only TatA subunits. Substrates initially bind to the TatABC complex, which probably triggers association of the separate TatA complex to form the active translocon.

The protein resides in the cell inner membrane. Its function is as follows. Part of the twin-arginine translocation (Tat) system that transports large folded proteins containing a characteristic twin-arginine motif in their signal peptide across membranes. TatA could form the protein-conducting channel of the Tat system. This is Sec-independent protein translocase protein TatA from Chelativorans sp. (strain BNC1).